The sequence spans 472 residues: 3-isopropylmalate dehydratase large subunit (472 aa).

Positions 347, 407, and 410 each coordinate [4Fe-4S] cluster.

Belongs to the aconitase/IPM isomerase family. LeuC type 1 subfamily. As to quaternary structure, heterodimer of LeuC and LeuD. Requires [4Fe-4S] cluster as cofactor.

It carries out the reaction (2R,3S)-3-isopropylmalate = (2S)-2-isopropylmalate. It functions in the pathway amino-acid biosynthesis; L-leucine biosynthesis; L-leucine from 3-methyl-2-oxobutanoate: step 2/4. Functionally, catalyzes the isomerization between 2-isopropylmalate and 3-isopropylmalate, via the formation of 2-isopropylmaleate. The chain is 3-isopropylmalate dehydratase large subunit from Synechococcus sp. (strain CC9902).